We begin with the raw amino-acid sequence, 599 residues long: Sulfite reductase [NADPH] flavoprotein alpha-component (599 aa).

Residues 63-201 (ITVISASQTG…LATAWRKQVV (139 aa)) form the Flavodoxin-like domain. FMN contacts are provided by residues 69 to 74 (SQTGNA), 116 to 119 (STQG), and 152 to 161 (LGDTSYENFC). The region spanning 234–448 (EQPLTAQLAV…IEHNDNFRLP (215 aa)) is the FAD-binding FR-type domain. Residues T322, H356, 386–389 (RLYS), 404–406 (TVG), Y410, and 419–422 (GGAS) contribute to the FAD site. NADP(+) is bound by residues 519-520 (SR), 525-529 (KVYVQ), and D561. FAD is bound at residue Y599.

This sequence belongs to the NADPH-dependent sulphite reductase flavoprotein subunit CysJ family. It in the N-terminal section; belongs to the flavodoxin family. In the C-terminal section; belongs to the flavoprotein pyridine nucleotide cytochrome reductase family. In terms of assembly, alpha(8)-beta(8). The alpha component is a flavoprotein, the beta component is a hemoprotein. FAD is required as a cofactor. It depends on FMN as a cofactor.

It catalyses the reaction hydrogen sulfide + 3 NADP(+) + 3 H2O = sulfite + 3 NADPH + 4 H(+). It participates in sulfur metabolism; hydrogen sulfide biosynthesis; hydrogen sulfide from sulfite (NADPH route): step 1/1. Functionally, component of the sulfite reductase complex that catalyzes the 6-electron reduction of sulfite to sulfide. This is one of several activities required for the biosynthesis of L-cysteine from sulfate. The flavoprotein component catalyzes the electron flow from NADPH -&gt; FAD -&gt; FMN to the hemoprotein component. This Serratia proteamaculans (strain 568) protein is Sulfite reductase [NADPH] flavoprotein alpha-component.